A 375-amino-acid polypeptide reads, in one-letter code: Probable Na(+)/H(+) antiporter GerT (375 aa).

10 consecutive transmembrane segments (helical) span residues 27-47 (PSVLGKLIVGIIIGPAVLGII), 89-109 (AGGIIFPFIGGYVTGLLFGLI), 112-132 (HAIFLGLLLCATSVSITVQTL), 145-165 (TILGAAVFDDVIVVILLAFVM), 183-203 (IIFFVSIVFIAWKVVPWIMKM), 204-224 (LVPLRVTEALISAALIICFSF), 226-246 (YYSEMMGIAGIIGAFAAGIAI), 261-281 (PIAYAIFVPVFFVSIGMEITF), 288-308 (LWFIIIMTLIAIFTKLIGSGL), and 350-370 (ENFTAIVIVVILTTIITPPLL).

Belongs to the monovalent cation:proton antiporter 2 (CPA2) transporter (TC 2.A.37) family.

Its subcellular location is the membrane. Functionally, contributes to the success of spore outgrowth from the germinated state during alkaline or Na(+) stress. Does not have a significant role in germination. The chain is Probable Na(+)/H(+) antiporter GerT (gerT) from Bacillus cereus.